A 351-amino-acid chain; its full sequence is Signal recognition particle receptor FtsY (351 aa).

Residues 156 to 163 (GINGTGKT), 238 to 242 (DTAGR), and 302 to 305 (TKLD) each bind GTP.

This sequence belongs to the GTP-binding SRP family. FtsY subfamily. As to quaternary structure, part of the signal recognition particle protein translocation system, which is composed of SRP and FtsY. SRP is a ribonucleoprotein composed of Ffh and a 4.5S RNA molecule.

The protein resides in the cell membrane. It localises to the cytoplasm. It carries out the reaction GTP + H2O = GDP + phosphate + H(+). Involved in targeting and insertion of nascent membrane proteins into the cytoplasmic membrane. Acts as a receptor for the complex formed by the signal recognition particle (SRP) and the ribosome-nascent chain (RNC). Interaction with SRP-RNC leads to the transfer of the RNC complex to the Sec translocase for insertion into the membrane, the hydrolysis of GTP by both Ffh and FtsY, and the dissociation of the SRP-FtsY complex into the individual components. This Buchnera aphidicola subsp. Schizaphis graminum (strain Sg) protein is Signal recognition particle receptor FtsY.